A 435-amino-acid polypeptide reads, in one-letter code: ATP-dependent RNA helicase RhlB (435 aa).

The Q motif motif lies at 9–37 (QKFADLGLNPQVVEGLEKKGFEFCTPIQA). A Helicase ATP-binding domain is found at 40–219 (LPVLLSGQDI…FEHMHNPEHV (180 aa)). 53–60 (AQTGTGKT) contributes to the ATP binding site. The DEAD box motif lies at 165–168 (DEAD). Residues 245-390 (ALLQTLIEEE…VSDYDSSALI (146 aa)) enclose the Helicase C-terminal domain. The disordered stretch occupies residues 395-435 (APVRTPSARNQQRRTNTGGARSGDRKSNNRRPRQPRQHKEA). The span at 401–413 (SARNQQRRTNTGG) shows a compositional bias: polar residues. Positions 422–435 (NNRRPRQPRQHKEA) are enriched in basic residues.

This sequence belongs to the DEAD box helicase family. RhlB subfamily. Component of the RNA degradosome, which is a multiprotein complex involved in RNA processing and mRNA degradation.

It is found in the cytoplasm. The catalysed reaction is ATP + H2O = ADP + phosphate + H(+). Functionally, DEAD-box RNA helicase involved in RNA degradation. Has RNA-dependent ATPase activity and unwinds double-stranded RNA. This is ATP-dependent RNA helicase RhlB from Vibrio vulnificus (strain YJ016).